A 528-amino-acid chain; its full sequence is ATP synthase subunit alpha 1 (528 aa).

Position 177 to 184 (177 to 184) interacts with ATP; the sequence is GDRQTGKT.

Belongs to the ATPase alpha/beta chains family. As to quaternary structure, F-type ATPases have 2 components, CF(1) - the catalytic core - and CF(0) - the membrane proton channel. CF(1) has five subunits: alpha(3), beta(3), gamma(1), delta(1), epsilon(1). CF(0) has three main subunits: a(1), b(2) and c(9-12). The alpha and beta chains form an alternating ring which encloses part of the gamma chain. CF(1) is attached to CF(0) by a central stalk formed by the gamma and epsilon chains, while a peripheral stalk is formed by the delta and b chains.

It localises to the cell inner membrane. It carries out the reaction ATP + H2O + 4 H(+)(in) = ADP + phosphate + 5 H(+)(out). In terms of biological role, produces ATP from ADP in the presence of a proton gradient across the membrane. The alpha chain is a regulatory subunit. This is ATP synthase subunit alpha 1 from Pseudoalteromonas atlantica (strain T6c / ATCC BAA-1087).